Here is a 1145-residue protein sequence, read N- to C-terminus: DNA polymerase II large subunit (1145 aa).

The tract at residues 284–303 (KSSSESDEDEETDGKPKIKP) is disordered.

This sequence belongs to the archaeal DNA polymerase II family. As to quaternary structure, heterodimer of a large subunit and a small subunit.

The enzyme catalyses DNA(n) + a 2'-deoxyribonucleoside 5'-triphosphate = DNA(n+1) + diphosphate. The catalysed reaction is Exonucleolytic cleavage in the 3'- to 5'-direction to yield nucleoside 5'-phosphates.. Functionally, possesses two activities: a DNA synthesis (polymerase) and an exonucleolytic activity that degrades single-stranded DNA in the 3'- to 5'-direction. Has a template-primer preference which is characteristic of a replicative DNA polymerase. The polypeptide is DNA polymerase II large subunit (Methanococcoides burtonii (strain DSM 6242 / NBRC 107633 / OCM 468 / ACE-M)).